The primary structure comprises 413 residues: Enolase (413 aa).

Q170 serves as a coordination point for (2R)-2-phosphoglycerate. The active-site Proton donor is E212. Mg(2+) contacts are provided by D245, E286, and D313. Positions 338, 367, 368, and 389 each coordinate (2R)-2-phosphoglycerate. K338 serves as the catalytic Proton acceptor.

It belongs to the enolase family. The cofactor is Mg(2+).

It localises to the cytoplasm. The protein localises to the secreted. Its subcellular location is the cell surface. The catalysed reaction is (2R)-2-phosphoglycerate = phosphoenolpyruvate + H2O. It functions in the pathway carbohydrate degradation; glycolysis; pyruvate from D-glyceraldehyde 3-phosphate: step 4/5. Functionally, catalyzes the reversible conversion of 2-phosphoglycerate (2-PG) into phosphoenolpyruvate (PEP). It is essential for the degradation of carbohydrates via glycolysis. The chain is Enolase from Neorickettsia sennetsu (strain ATCC VR-367 / Miyayama) (Ehrlichia sennetsu).